The primary structure comprises 425 residues: Homogentisate 1,2-dioxygenase (425 aa).

The active-site Proton acceptor is H283. Residues H326 and E332 each contribute to the Fe cation site. Residues Y341 and H362 each contribute to the homogentisate site. Fe cation is bound at residue H362.

This sequence belongs to the homogentisate dioxygenase family. In terms of assembly, hexamer; dimer of trimers. The cofactor is Fe cation.

It carries out the reaction homogentisate + O2 = 4-maleylacetoacetate + H(+). It functions in the pathway amino-acid degradation; L-phenylalanine degradation; acetoacetate and fumarate from L-phenylalanine: step 4/6. Functionally, involved in the catabolism of homogentisate (2,5-dihydroxyphenylacetate or 2,5-OH-PhAc), a central intermediate in the degradation of phenylalanine and tyrosine. Catalyzes the oxidative ring cleavage of the aromatic ring of homogentisate to yield maleylacetoacetate. The chain is Homogentisate 1,2-dioxygenase from Caulobacter vibrioides (strain ATCC 19089 / CIP 103742 / CB 15) (Caulobacter crescentus).